The primary structure comprises 273 residues: Undecaprenyl-diphosphatase (273 aa).

6 helical membrane-spanning segments follow: residues 46–63 (LFEV…CWEY), 83–103 (FVLN…LAGK), 109–129 (LFNS…ILWV), 184–204 (ATEF…AYDL), 218–238 (AFGI…RGLL), and 249–269 (FAWY…YGLV).

It belongs to the UppP family.

It is found in the cell inner membrane. The catalysed reaction is di-trans,octa-cis-undecaprenyl diphosphate + H2O = di-trans,octa-cis-undecaprenyl phosphate + phosphate + H(+). Functionally, catalyzes the dephosphorylation of undecaprenyl diphosphate (UPP). Confers resistance to bacitracin. In Methylococcus capsulatus (strain ATCC 33009 / NCIMB 11132 / Bath), this protein is Undecaprenyl-diphosphatase.